We begin with the raw amino-acid sequence, 887 residues long: Putative RNA-binding protein 15B (887 aa).

Residues 1–132 (MKRQSERDSS…EPAGPGSTAA (132 aa)) are disordered. A compositionally biased stretch (low complexity) spans 10–20 (SPSGRGSSSSA). Basic and acidic residues-rich tracts occupy residues 22–34 (RPRE…EAGG) and 65–77 (GHRD…DANH). Residues 83–94 (RSSGAPGGGGRT) show a composition bias toward gly residues. Residues 95–110 (GKASGDPGAGGASPRA) show a composition bias toward low complexity. A phosphoserine mark is found at Ser-107 and Ser-111. A compositionally biased stretch (pro residues) spans 111–122 (SPLPPPPPPPGA). Residues 123–132 (EPAGPGSTAA) show a composition bias toward low complexity. Residues 136–216 (KTLLISSLSP…RPLKVEPVYL (81 aa)) enclose the RRM 1 domain. Residue Lys-210 forms a Glycyl lysine isopeptide (Lys-Gly) (interchain with G-Cter in SUMO2) linkage. Residues 215-249 (YLRGGGSSRRSSSSSAAASTPPPGPPAPADPLGYL) form a disordered region. The segment covering 222–233 (SRRSSSSSAAAS) has biased composition (low complexity). Pro residues predominate over residues 234–243 (TPPPGPPAPA). A phosphoserine mark is found at Ser-261 and Ser-263. RRM domains lie at 333–410 (RNLF…YGKA) and 414–488 (TRLW…FAKA). Thr-529 carries the post-translational modification Phosphothreonine. Phosphoserine is present on residues Ser-549, Ser-553, and Ser-559. Residues 549–703 (SLSKSSDRRN…TLEEPKHETK (155 aa)) form a disordered region. Basic and acidic residues-rich tracts occupy residues 570–613 (RSGE…ERSR), 623–643 (RGSD…EGTK), and 668–700 (EAPD…EPKH). Residues 590–594 (RRKRR) carry the Nuclear localization signal motif. Lys-699 participates in a covalent cross-link: Glycyl lysine isopeptide (Lys-Gly) (interchain with G-Cter in SUMO2). The SPOC domain maps to 708–886 (LSEYAQTLQL…HMVIVIVRDT (179 aa)). The interaction with Epstein-Barr virus BMLF1 stretch occupies residues 719–887 (WNGLLVLKNS…MVIVIVRDTA (169 aa)).

It belongs to the RRM Spen family. As to quaternary structure, component of the WMM complex, a N6-methyltransferase complex composed of a catalytic subcomplex, named MAC, and of an associated subcomplex, named MACOM. The MAC subcomplex is composed of METTL3 and METTL14. The MACOM subcomplex is composed of WTAP, ZC3H13, CBLL1/HAKAI, VIRMA, and, in some cases of RBM15 (RBM15 or RBM15B). May interact with NCOR2. Interacts with NXF1, the interaction is required to promote mRNA export.

It localises to the nucleus. The protein localises to the nucleoplasm. The protein resides in the nucleus speckle. Its subcellular location is the nucleus envelope. RNA-binding protein that acts as a key regulator of N6-methyladenosine (m6A) methylation of RNAs, thereby regulating different processes, such as alternative splicing of mRNAs and X chromosome inactivation mediated by Xist RNA. Associated component of the WMM complex, a complex that mediates N6-methyladenosine (m6A) methylation of RNAs, a modification that plays a role in the efficiency of mRNA splicing and RNA processing. Plays a key role in m6A methylation, possibly by binding target RNAs and recruiting the WMM complex. Involved in random X inactivation mediated by Xist RNA: acts by binding Xist RNA and recruiting the WMM complex, which mediates m6A methylation, leading to target YTHDC1 reader on Xist RNA and promoting transcription repression activity of Xist. Functions in the regulation of alternative or illicit splicing, possibly by regulating m6A methylation. Inhibits pre-mRNA splicing. Also functions as a mRNA export factor by acting as a cofactor for the nuclear export receptor NXF1. This chain is Putative RNA-binding protein 15B (Rbm15b), found in Mus musculus (Mouse).